The chain runs to 50 residues: Protein hunchback (50 aa).

C2H2-type zinc fingers lie at residues 1 to 5 (HILKH), 11 to 33 (IRCP…MKSH), and 39 to 50 (YRCLDCNYATKY).

Belongs to the hunchback C2H2-type zinc-finger protein family.

The protein localises to the nucleus. In terms of biological role, gap class segmentation protein that controls development of head structures. This is Protein hunchback (hb) from Bradysia coprophila (Dark-winged fungus gnat).